The primary structure comprises 295 residues: Virginiamycin B lyase (295 aa).

H228 is a binding site for substrate. Position 268 (E268) interacts with Mg(2+). Residue H270 is the Proton acceptor of the active site. E285 is a Mg(2+) binding site.

It belongs to the Vgb family. In terms of assembly, monomer. Requires Mg(2+) as cofactor.

Inactivates the type B streptogramin antibiotics by linearizing the lactone ring at the ester linkage, generating a free phenylglycine carboxylate and converting the threonyl moiety into 2-amino-butenoic acid. The sequence is that of Virginiamycin B lyase from Clostridium beijerinckii (strain ATCC 51743 / NCIMB 8052) (Clostridium acetobutylicum).